The sequence spans 410 residues: Lissencephaly-1 homolog B (410 aa).

Positions 7-39 (QRDELNRAIADYLRSNGYEEAYSTFKKEAELDV) constitute a LisH domain. The stretch at 56–82 (TSVIRLQKKVMELESKLNEAKEEITLG) forms a coiled coil. 7 WD repeats span residues 106-147 (GHRS…RTLK), 148-187 (GHTD…CIRT), 190-229 (GHDH…CVKT), 232-271 (GHRE…CKAE), 274-333 (EHEH…CLMT), 336-377 (GHDN…KTLS), and 379-410 (HEHF…WECR).

Belongs to the WD repeat LIS1/nudF family. In terms of assembly, can self-associate. Component of the cytosolic PAF-AH (I) heterotetrameric enzyme, which is composed of PAFAH1B1 (beta), PAFAH1B2 (alpha2) and PAFAH1B3 (alpha1) subunits. The catalytic activity of the enzyme resides in the alpha1 (PAFAH1B3) and alpha2 (PAFAH1B2) subunits, whereas the beta subunit (PAFAH1B1) has regulatory activity. Trimer formation is not essential for the catalytic activity. Interacts with dynein, dynactin, nde1 and ndel1. As to expression, enriched in the photoreceptor cell layer.

It is found in the cytoplasm. Its subcellular location is the cytoskeleton. The protein resides in the microtubule organizing center. It localises to the centrosome. Its function is as follows. Regulatory subunit (beta subunit) of the cytosolic type I platelet-activating factor (PAF) acetylhydrolase (PAF-AH (I)), an enzyme that catalyzes the hydrolyze of the acetyl group at the sn-2 position of PAF and its analogs and participates in the PAF inactivation. Regulates the PAF-AH (I) activity in a catalytic dimer composition-dependent manner. Positively regulates the activity of the minus-end directed microtubule motor protein dynein. May enhance dynein-mediated microtubule sliding by targeting dynein to the microtubule plus end. Required for several dynein- and microtubule-dependent processes such as the maintenance of Golgi integrity, the peripheral transport of microtubule fragments and the coupling of the nucleus and centrosome. May be required for proliferation of neuronal precursors and neuronal migration. Involved in the positioning of nuclei in photoreceptor cells. In Danio rerio (Zebrafish), this protein is Lissencephaly-1 homolog B (pafah1b1b).